Reading from the N-terminus, the 92-residue chain is Small ribosomal subunit protein uS19 (92 aa).

The protein belongs to the universal ribosomal protein uS19 family.

Protein S19 forms a complex with S13 that binds strongly to the 16S ribosomal RNA. This chain is Small ribosomal subunit protein uS19, found in Legionella pneumophila (strain Paris).